Reading from the N-terminus, the 178-residue chain is FXYD domain-containing ion transport regulator 5 (178 aa).

Positions 1-21 (MSPPSQLCLLTIVALILPSEG) are cleaved as a signal peptide. The interval 21–126 (GQTPEKPRSS…YMPPSYIENP (106 aa)) is disordered. Over 22 to 146 (QTPEKPRSSF…YDNTTLRKRG (125 aa)) the chain is Extracellular. The segment covering 29–58 (SSFTAHQSSVTTHVPVPDQTSPGVQTTPPI) has biased composition (polar residues). Over residues 70 to 79 (QTAAKTKTQQ) the composition is skewed to low complexity. A helical transmembrane segment spans residues 147 to 164 (LLVAAVLFITGIIILTSG). Residues 165–178 (KCRQFSQLCLNRHR) lie on the Cytoplasmic side of the membrane.

Belongs to the FXYD family. As to quaternary structure, regulatory subunit of the sodium/potassium-transporting ATPase which is composed of a catalytic alpha subunit, a non-catalytic beta subunit and an additional regulatory subunit. The regulatory subunit, a member of the FXYD protein family, modulates the enzymatic activity in a tissue- and isoform-specific way by changing affinities of the Na+/K+-ATPase toward Na(+), K(+) or ATP. Glycosylated. In terms of tissue distribution, spleen, lung, skeletal muscle, and testis.

Its subcellular location is the cell membrane. It is found in the basolateral cell membrane. In terms of biological role, associates with and regulates the activity of the sodium/potassium-transporting ATPase (NKA) which catalyzes the hydrolysis of ATP coupled with the exchange of Na(+) and K(+) ions across the plasma membrane. May increase NKA activity by increasing the apparent affinity for Na(+). Involved in down-regulation of E-cadherin which results in reduced cell adhesion. Promotes metastasis. The chain is FXYD domain-containing ion transport regulator 5 (Fxyd5) from Rattus norvegicus (Rat).